The following is a 318-amino-acid chain: 2-keto-3-deoxygluconate permease (318 aa).

10 helical membrane-spanning segments follow: residues 10–30, 42–62, 76–96, 105–125, 139–159, 162–182, 199–219, 224–244, 254–274, and 289–309; these read IPGGLMLVPLFLGAFCNTFTP, GLITGTIPILAVWFFCMGASI, VLVVTKLATAWVVAMIAGAFL, LLAGISVLALVAAMDMTNGGL, AGAFVLMSLESGPLMTMVILG, GIATFEPQLFVGAVLPFLIGF, VQTLIPFFAFALGNTINLSVI, FAGIFLGVLVIIVTGIPLILA, TAGIAASSSAGAAVATPLLIA, and ALVATSVIVTSVLVPIITALW.

This sequence belongs to the KdgT transporter family.

It is found in the cell inner membrane. The enzyme catalyses 2-dehydro-3-deoxy-D-gluconate(in) + H(+)(in) = 2-dehydro-3-deoxy-D-gluconate(out) + H(+)(out). Its function is as follows. Catalyzes the proton-dependent uptake of 2-keto-3-deoxygluconate (KDG) into the cell. In Pectobacterium atrosepticum (strain SCRI 1043 / ATCC BAA-672) (Erwinia carotovora subsp. atroseptica), this protein is 2-keto-3-deoxygluconate permease.